Reading from the N-terminus, the 238-residue chain is NAD-dependent protein deacylase (238 aa).

The 237-residue stretch at 1–237 folds into the Deacetylase sirtuin-type domain; the sequence is MRGIMKVFVL…PAWVERLLAR (237 aa). 12–31 is a binding site for NAD(+); it reads GAGVSAESGLGTFRDKDGVW. 2 residues coordinate substrate: Y56 and R59. An NAD(+)-binding site is contributed by 94 to 97; sequence QNVD. H112 functions as the Proton acceptor in the catalytic mechanism. Residues C120, C123, C139, and C142 each contribute to the Zn(2+) site. NAD(+) is bound by residues 179–181, 205–207, and A223; these read GTS and NLE.

This sequence belongs to the sirtuin family. Class III subfamily. Zn(2+) serves as cofactor.

It is found in the cytoplasm. It carries out the reaction N(6)-acetyl-L-lysyl-[protein] + NAD(+) + H2O = 2''-O-acetyl-ADP-D-ribose + nicotinamide + L-lysyl-[protein]. The catalysed reaction is N(6)-succinyl-L-lysyl-[protein] + NAD(+) + H2O = 2''-O-succinyl-ADP-D-ribose + nicotinamide + L-lysyl-[protein]. In terms of biological role, NAD-dependent lysine deacetylase and desuccinylase that specifically removes acetyl and succinyl groups on target proteins. Modulates the activities of several proteins which are inactive in their acylated form. The polypeptide is NAD-dependent protein deacylase (Caulobacter vibrioides (strain ATCC 19089 / CIP 103742 / CB 15) (Caulobacter crescentus)).